The primary structure comprises 95 residues: Glutamyl-tRNA(Gln) amidotransferase subunit C 1 (95 aa).

This sequence belongs to the GatC family. As to quaternary structure, heterotrimer of A, B and C subunits.

The enzyme catalyses L-glutamyl-tRNA(Gln) + L-glutamine + ATP + H2O = L-glutaminyl-tRNA(Gln) + L-glutamate + ADP + phosphate + H(+). It catalyses the reaction L-aspartyl-tRNA(Asn) + L-glutamine + ATP + H2O = L-asparaginyl-tRNA(Asn) + L-glutamate + ADP + phosphate + 2 H(+). Allows the formation of correctly charged Asn-tRNA(Asn) or Gln-tRNA(Gln) through the transamidation of misacylated Asp-tRNA(Asn) or Glu-tRNA(Gln) in organisms which lack either or both of asparaginyl-tRNA or glutaminyl-tRNA synthetases. The reaction takes place in the presence of glutamine and ATP through an activated phospho-Asp-tRNA(Asn) or phospho-Glu-tRNA(Gln). In Clostridium acetobutylicum (strain ATCC 824 / DSM 792 / JCM 1419 / IAM 19013 / LMG 5710 / NBRC 13948 / NRRL B-527 / VKM B-1787 / 2291 / W), this protein is Glutamyl-tRNA(Gln) amidotransferase subunit C 1 (gatC1).